We begin with the raw amino-acid sequence, 167 residues long: Cytochrome c-type biogenesis protein CcmE (167 aa).

At methionine 1 to arginine 7 the chain is on the cytoplasmic side. Residues leucine 8–alanine 28 form a helical; Signal-anchor for type II membrane protein membrane-spanning segment. At leucine 29–lysine 167 the chain is on the periplasmic side. Histidine 122 and tyrosine 126 together coordinate heme. A compositionally biased stretch (basic and acidic residues) spans lysine 137–proline 150. Residues lysine 137–lysine 167 are disordered. The segment covering glycine 151 to asparagine 161 has biased composition (polar residues).

The protein belongs to the CcmE/CycJ family.

It localises to the cell inner membrane. In terms of biological role, heme chaperone required for the biogenesis of c-type cytochromes. Transiently binds heme delivered by CcmC and transfers the heme to apo-cytochromes in a process facilitated by CcmF and CcmH. The chain is Cytochrome c-type biogenesis protein CcmE from Rhodopseudomonas palustris (strain ATCC BAA-98 / CGA009).